Consider the following 186-residue polypeptide: Transcriptional repressor NrdR (186 aa).

Residues 3-34 fold into a zinc finger; the sequence is CPFCRHPDSRVVDSREAEEGAAIRRRRSCPAC. The 91-residue stretch at 46–136 folds into the ATP-cone domain; the sequence is LRVRKRSGAT…VYLAFESLGD (91 aa). Positions 149-169 are disordered; that stretch reads AGGGEPPVAGKPTTMPAATGA.

It belongs to the NrdR family. Zn(2+) serves as cofactor.

Negatively regulates transcription of bacterial ribonucleotide reductase nrd genes and operons by binding to NrdR-boxes. This is Transcriptional repressor NrdR from Parafrankia sp. (strain EAN1pec).